We begin with the raw amino-acid sequence, 242 residues long: MAPK-interacting and spindle-stabilizing protein-like (242 aa).

Disordered stretches follow at residues 1–145 (MSDE…SLGP) and 192–242 (PPGA…HSYH). At serine 2 the chain carries N-acetylserine. 3 positions are modified to phosphoserine: serine 2, serine 6, and serine 15. Over residues 13-29 (EQSSAKPPAVTNTKAGH) the composition is skewed to polar residues. Positions 30 to 43 (SSQGWPGSSPWSNP) are enriched in low complexity. Pro residues-rich tracts occupy residues 44 to 53 (SAPPAMPSGL) and 75 to 114 (SMPP…PGPT). Residues 192–210 (PPGAWGPAAPYPGPAGSYP) show a composition bias toward low complexity.

The protein belongs to the MISS family.

The protein is MAPK-interacting and spindle-stabilizing protein-like (Mapk1ip1l) of Mus musculus (Mouse).